The chain runs to 131 residues: Small ribosomal subunit protein uS8 (131 aa).

This sequence belongs to the universal ribosomal protein uS8 family. Part of the 30S ribosomal subunit. Contacts proteins S5 and S12.

Functionally, one of the primary rRNA binding proteins, it binds directly to 16S rRNA central domain where it helps coordinate assembly of the platform of the 30S subunit. The sequence is that of Small ribosomal subunit protein uS8 from Dictyoglomus turgidum (strain DSM 6724 / Z-1310).